We begin with the raw amino-acid sequence, 117 residues long: NADH-ubiquinone oxidoreductase chain 3 (117 aa).

The next 3 helical transmembrane spans lie at 2–22, 56–76, and 85–105; these read ILYV…IYLL, FFIL…LFPV, and SPLI…GLLY.

It belongs to the complex I subunit 3 family.

The protein localises to the mitochondrion membrane. It catalyses the reaction a ubiquinone + NADH + 5 H(+)(in) = a ubiquinol + NAD(+) + 4 H(+)(out). In terms of biological role, core subunit of the mitochondrial membrane respiratory chain NADH dehydrogenase (Complex I) that is believed to belong to the minimal assembly required for catalysis. Complex I functions in the transfer of electrons from NADH to the respiratory chain. The immediate electron acceptor for the enzyme is believed to be ubiquinone. The polypeptide is NADH-ubiquinone oxidoreductase chain 3 (ND3) (Albinaria caerulea (Land snail)).